The chain runs to 430 residues: tRNA(Ile)-lysidine synthase (430 aa).

24–29 (SGGLDS) lines the ATP pocket.

Belongs to the tRNA(Ile)-lysidine synthase family.

It localises to the cytoplasm. It catalyses the reaction cytidine(34) in tRNA(Ile2) + L-lysine + ATP = lysidine(34) in tRNA(Ile2) + AMP + diphosphate + H(+). Functionally, ligates lysine onto the cytidine present at position 34 of the AUA codon-specific tRNA(Ile) that contains the anticodon CAU, in an ATP-dependent manner. Cytidine is converted to lysidine, thus changing the amino acid specificity of the tRNA from methionine to isoleucine. This chain is tRNA(Ile)-lysidine synthase, found in Haemophilus influenzae (strain 86-028NP).